The chain runs to 306 residues: Protodermal factor 1 (306 aa).

The signal sequence occupies residues 1 to 23; that stretch reads MRGMVSFAVWALFAALLSQQLFA. A compositionally biased stretch (low complexity) spans 40–56; it reads PPSGSHGTPPSHTPPSS. The segment at 40 to 156 is disordered; it reads PPSGSHGTPP…VVTPPSPIVD (117 aa). A compositionally biased stretch (pro residues) spans 62 to 83; sequence PYDPSPSTPSHPSPPSHTPTPS. Positions 84 to 99 are enriched in low complexity; it reads TPSHTPTPHTPSHTPT. The span at 139-154 shows a compositional bias: pro residues; that stretch reads SPPPRTPVVVTPPSPI.

As to expression, confined to the shoot apical meristem (SAM) at the layer L1 in vegetative, infloresence and floral meristems, as well as in protoderm of organ primordia, including during embryogenesis. Also present in the tip of emerging lateral root primordia.

In terms of biological role, may be involved in the regulation of meristem growth. The chain is Protodermal factor 1 (PDF1) from Arabidopsis thaliana (Mouse-ear cress).